A 337-amino-acid polypeptide reads, in one-letter code: F420-dependent glucose-6-phosphate dehydrogenase (337 aa).

D40 is a coenzyme F420-(gamma-Glu)n binding site. H41 acts as the Proton donor in catalysis. Residues T77 and T108 to G109 each bind coenzyme F420-(gamma-Glu)n. Residue E110 is the Proton acceptor of the active site. Residues N113, G178–G179, and V181–V182 each bind coenzyme F420-(gamma-Glu)n. The substrate site is built by T196, K199, K260, and R284.

The protein belongs to the F420-dependent glucose-6-phosphate dehydrogenase family. In terms of assembly, homodimer.

It carries out the reaction oxidized coenzyme F420-(gamma-L-Glu)(n) + D-glucose 6-phosphate + H(+) = 6-phospho-D-glucono-1,5-lactone + reduced coenzyme F420-(gamma-L-Glu)(n). Catalyzes the coenzyme F420-dependent oxidation of glucose 6-phosphate (G6P) to 6-phosphogluconolactone. This Rhodococcus hoagii (strain 103S) (Rhodococcus equi) protein is F420-dependent glucose-6-phosphate dehydrogenase.